Here is a 364-residue protein sequence, read N- to C-terminus: Aminomethyltransferase (364 aa).

Belongs to the GcvT family. As to quaternary structure, the glycine cleavage system is composed of four proteins: P, T, L and H.

The catalysed reaction is N(6)-[(R)-S(8)-aminomethyldihydrolipoyl]-L-lysyl-[protein] + (6S)-5,6,7,8-tetrahydrofolate = N(6)-[(R)-dihydrolipoyl]-L-lysyl-[protein] + (6R)-5,10-methylene-5,6,7,8-tetrahydrofolate + NH4(+). Its function is as follows. The glycine cleavage system catalyzes the degradation of glycine. This is Aminomethyltransferase from Shigella boydii serotype 18 (strain CDC 3083-94 / BS512).